A 483-amino-acid polypeptide reads, in one-letter code: Proton-coupled amino acid transporter 2 (483 aa).

The Cytoplasmic segment spans residues 1–58; it reads MSVTKSTEGPQGAVAIKLDLMSPPESAKKLENKDSTFLDESPSESAGLKKTKGITVFQ. The segment covering 26–36 has biased composition (basic and acidic residues); sequence SAKKLENKDST. The tract at residues 26 to 46 is disordered; that stretch reads SAKKLENKDSTFLDESPSESA. Residues 59 to 79 traverse the membrane as a helical segment; it reads ALIHLVKGNMGTGILGLPLAV. Over 80–81 the chain is Extracellular; the sequence is KN. The chain crosses the membrane as a helical span at residues 82 to 102; sequence AGILMGPLSLLVMGFIACHCM. At 103 to 148 the chain is on the cytoplasmic side; the sequence is HILVKCAQRFCKRLNKPFMDYGDTVMHGLEANPNAWLQNHAHWGRH. A helical membrane pass occupies residues 149-169; it reads IVSFFLIITQLGFCCVYIVFL. The Extracellular segment spans residues 170 to 197; sequence ADNLKQVVEAVNSTTNNCYSNETVILTP. Residues 198 to 218 form a helical membrane-spanning segment; that stretch reads TMDSRLYMLSFLPFLVLLVLI. Residues 219 to 222 are Cytoplasmic-facing; it reads RNLR. The helical transmembrane segment at 223–243 threads the bilayer; sequence ILTIFSMLANISMLVSLVIII. The Extracellular segment spans residues 244 to 264; sequence QYITQEIPDPSRLPLVASWKT. Residues 265-285 form a helical membrane-spanning segment; it reads YPLFFGTAIFSFESIGVVLPL. Topologically, residues 286 to 296 are cytoplasmic; the sequence is ENKMKNARHFP. The helical transmembrane segment at 297–317 threads the bilayer; sequence AILSLGMSIVTSLYIGMAALG. The Extracellular portion of the chain corresponds to 318–349; it reads YLRFGDDIKASISLNLPNCWLYQSVKLLYIAG. Residues 350 to 370 traverse the membrane as a helical segment; that stretch reads ILCTYALQFYVPAEIIIPFAI. The Cytoplasmic portion of the chain corresponds to 371-379; it reads SRVSTRWAL. A helical transmembrane segment spans residues 380–400; sequence PLDLSIRLVMVCLTCLLAILI. Topologically, residues 401–404 are extracellular; sequence PRLD. A helical membrane pass occupies residues 405 to 425; sequence LVISLVGSVSGTALALIIPPL. At 426–437 the chain is on the cytoplasmic side; that stretch reads LEVTTFYSEGMS. A helical membrane pass occupies residues 438–458; sequence PLTIFKDALISILGFVGFVVG. Over 459 to 483 the chain is Extracellular; that stretch reads TYQALDELLKSEDSHPFSNSTTFVR.

This sequence belongs to the amino acid/polyamine transporter 2 family. In terms of tissue distribution, abundantly expressed in kidney and muscle. Expressed in the S1 segment of the proximal tubule close to the glomerulus.

It is found in the cell membrane. It localises to the endoplasmic reticulum membrane. The protein localises to the recycling endosome membrane. It catalyses the reaction glycine(in) + H(+)(in) = glycine(out) + H(+)(out). It carries out the reaction L-alanine(in) + H(+)(in) = L-alanine(out) + H(+)(out). The enzyme catalyses D-alanine(in) + H(+)(in) = D-alanine(out) + H(+)(out). The catalysed reaction is L-proline(out) + H(+)(out) = L-proline(in) + H(+)(in). It catalyses the reaction D-proline(out) + H(+)(out) = D-proline(in) + H(+)(in). It carries out the reaction 4-hydroxy-L-proline(in) + H(+)(in) = 4-hydroxy-L-proline(out) + H(+)(out). The enzyme catalyses L-serine(in) + H(+)(in) = L-serine(out) + H(+)(out). The catalysed reaction is D-serine(out) + H(+)(out) = D-serine(in) + H(+)(in). It catalyses the reaction beta-alanine(in) + H(+)(in) = beta-alanine(out) + H(+)(out). It carries out the reaction 4-aminobutanoate(in) + H(+)(in) = 4-aminobutanoate(out) + H(+)(out). The enzyme catalyses sarcosine(in) + H(+)(in) = sarcosine(out) + H(+)(out). The catalysed reaction is N,N-dimethylglycine(in) + H(+)(in) = N,N-dimethylglycine(out) + H(+)(out). Functionally, electrogenic proton/amino acid symporter with a high selectivity for the small side chains amino acids glycine, alanine and proline, where both L- and D-enantiomers are transported. Extension of the backbone length, as in beta-alanine and 4-aminobutanoate or methylation of the amino group, as in sarcosine and N,N-dimethylglycine, are also tolerated but decrease transport efficiency. A free carboxyl group is preferred. In Homo sapiens (Human), this protein is Proton-coupled amino acid transporter 2.